The sequence spans 142 residues: Spliceosomal protein DIB1 (142 aa).

The protein belongs to the DIM1 family. As to quaternary structure, component of the 25S [U4/U6.U5] tri-snRNP.

Its subcellular location is the nucleus. Functionally, essential role in pre-mRNA splicing. Also essential for entry into mitosis (G2/M progression) as well as for chromosome segregation during mitosis. This chain is Spliceosomal protein DIB1 (DIB1), found in Candida glabrata (strain ATCC 2001 / BCRC 20586 / JCM 3761 / NBRC 0622 / NRRL Y-65 / CBS 138) (Yeast).